Here is a 93-residue protein sequence, read N- to C-terminus: Ferredoxin-2 (93 aa).

In terms of domain architecture, 2Fe-2S ferredoxin-type spans 2–91 (YKVTLKTPDG…DVVIETHKED (90 aa)). Positions 37, 42, 45, and 75 each coordinate [2Fe-2S] cluster.

Belongs to the 2Fe2S plant-type ferredoxin family. The cofactor is [2Fe-2S] cluster.

It localises to the plastid. The protein localises to the chloroplast. Ferredoxins are iron-sulfur proteins that transfer electrons in a wide variety of metabolic reactions. This Equisetum telmateia (Great horsetail) protein is Ferredoxin-2.